A 309-amino-acid polypeptide reads, in one-letter code: Methionyl-tRNA formyltransferase (309 aa).

Residue 110–113 participates in (6S)-5,6,7,8-tetrahydrofolate binding; that stretch reads SLLP. The disordered stretch occupies residues 289-309; that stretch reads KRMAATDWARGSRIEQGERLK. The segment covering 298 to 309 has biased composition (basic and acidic residues); sequence RGSRIEQGERLK.

The protein belongs to the Fmt family.

The catalysed reaction is L-methionyl-tRNA(fMet) + (6R)-10-formyltetrahydrofolate = N-formyl-L-methionyl-tRNA(fMet) + (6S)-5,6,7,8-tetrahydrofolate + H(+). Attaches a formyl group to the free amino group of methionyl-tRNA(fMet). The formyl group appears to play a dual role in the initiator identity of N-formylmethionyl-tRNA by promoting its recognition by IF2 and preventing the misappropriation of this tRNA by the elongation apparatus. The chain is Methionyl-tRNA formyltransferase from Saccharopolyspora erythraea (strain ATCC 11635 / DSM 40517 / JCM 4748 / NBRC 13426 / NCIMB 8594 / NRRL 2338).